The following is a 490-amino-acid chain: Protein twist (490 aa).

Disordered stretches follow at residues glutamine 48–glutamine 74, proline 98–serine 167, and leucine 330–glutamate 359. Residues glutamine 54–glutamine 64 are compositionally biased toward basic residues. Composition is skewed to low complexity over residues histidine 65–glutamine 74 and serine 104–serine 135. The segment covering alanine 339 to proline 351 has biased composition (basic residues). The bHLH domain maps to asparagine 362–leucine 413.

In terms of assembly, efficient DNA binding requires dimerization with another bHLH protein. Homodimer.

The protein localises to the nucleus. Functionally, involved in the establishment and dorsoventral patterning of germ layers in the embryo. This Drosophila erecta (Fruit fly) protein is Protein twist.